The sequence spans 632 residues: Cytosolic Fe-S cluster assembly factor NAR1 (632 aa).

Cys20 is a [4Fe-4S] cluster binding site. A disordered region spans residues 27–53; it reads LPAKPEDSSNPYEVTTEDKAAASQPPP. The [4Fe-4S] cluster site is built by Cys62, Cys65, and Cys68. 2 disordered regions span residues 99-119 and 210-231; these read WQTQNGTNGTNGTNGTTNGHS and LSPETSNPSTKPGSEGAIDTTP. A compositionally biased stretch (low complexity) spans 101–119; the sequence is TQNGTNGTNGTNGTTNGHS. Residues 211 to 221 show a composition bias toward polar residues; sequence SPETSNPSTKP. The [4Fe-4S] cluster site is built by Cys240, Cys295, Cys486, and Cys490. The interval 542 to 573 is disordered; that stretch reads GSDSEEEKVDQDGDQNMQDATTNGHTSEPDIV. A compositionally biased stretch (acidic residues) spans 544–554; that stretch reads DSEEEKVDQDG. Residues 555-567 are compositionally biased toward polar residues; it reads DQNMQDATTNGHT.

The protein belongs to the NARF family.

Component of the cytosolic Fe/S protein assembly machinery. Required for maturation of extramitochondrial Fe/S proteins. May play a role in the transfer of pre-assembled Fe/S clusters to target apoproteins. In Phaeosphaeria nodorum (strain SN15 / ATCC MYA-4574 / FGSC 10173) (Glume blotch fungus), this protein is Cytosolic Fe-S cluster assembly factor NAR1 (NAR1).